The following is a 153-amino-acid chain: MKVRVVAVGRDRSGLYAPAVEEYAKRLGRYLRFELVEVPEARKLAGTAGAKGEEGATLLAKIGPRERVVVLDERGDELTSVAFAERVRRWMERGQDVALLIGGSDGLAPEVLARADERLAVSRFTLAHRLARLVLVEQLYRAMTILRGEPYHK.

Residues L71 and G102 each contribute to the S-adenosyl-L-methionine site.

It belongs to the RNA methyltransferase RlmH family. In terms of assembly, homodimer.

It localises to the cytoplasm. It catalyses the reaction pseudouridine(1915) in 23S rRNA + S-adenosyl-L-methionine = N(3)-methylpseudouridine(1915) in 23S rRNA + S-adenosyl-L-homocysteine + H(+). Its function is as follows. Specifically methylates the pseudouridine at position 1915 (m3Psi1915) in 23S rRNA. In Anaeromyxobacter sp. (strain K), this protein is Ribosomal RNA large subunit methyltransferase H.